The sequence spans 404 residues: Double-stranded RNA-binding protein 5 (404 aa).

DRBM domains are found at residues 1–70 (MYKN…RLSL) and 87–155 (VYKN…SLKQ). Disordered regions lie at residues 195–236 (RRRR…STEE), 263–320 (GGRT…RRNA), and 336–362 (RRRP…FSDP). Low complexity predominate over residues 263 to 280 (GGRTQDTASPAPAAAAAS). A compositionally biased stretch (basic residues) spans 302-316 (AGAHAARRHAARQGG).

In terms of biological role, binds double-stranded RNA. The protein is Double-stranded RNA-binding protein 5 (DRB5) of Oryza sativa subsp. japonica (Rice).